A 387-amino-acid polypeptide reads, in one-letter code: Alpha-2B adrenergic receptor (387 aa).

Residues 1–25 form a helical membrane-spanning segment; that stretch reads AIAAVITFLILFTIFGNALVILAVL. Topologically, residues 26 to 36 are cytoplasmic; the sequence is TSRSLRAPQNL. The chain crosses the membrane as a helical span at residues 37–62; sequence FLVSLAAADILVATLIIPFSLANELL. The Extracellular portion of the chain corresponds to 63-72; that stretch reads GYWYFRHTWC. The cysteines at positions 72 and 151 are disulfide-linked. The helical transmembrane segment at 73–95 threads the bilayer; the sequence is XVYLALDVLFCTSSIVHLCAISL. Topologically, residues 96–117 are cytoplasmic; the sequence is DRYWAVSRALEYNSKRTPRRIK. Residues 118 to 140 traverse the membrane as a helical segment; that stretch reads CIILTVWLIAAAISLPPLIYKGD. Topologically, residues 141 to 156 are extracellular; it reads QDPQPRGRPQCKLNQE. The helical transmembrane segment at 157–180 threads the bilayer; it reads AWYILSSSIGSFFVPCLIMILVYL. Residues 181–351 are Cytoplasmic-facing; sequence RIYLIAKRSS…LTREKRFTFV (171 aa). A disordered region spans residues 193–303; it reads RKPRAKGXPR…VPASPALACS (111 aa). Residues 279–290 show a composition bias toward acidic residues; sequence PEEEAEEEEECG. The chain crosses the membrane as a helical span at residues 352 to 375; the sequence is LAVVIGVFVLCWFPFFFSYSLGAI. Topologically, residues 376-384 are extracellular; the sequence is CPQHCKVPH. Residues 385–387 traverse the membrane as a helical segment; it reads GLF.

The protein belongs to the G-protein coupled receptor 1 family. Adrenergic receptor subfamily. ADRA2B sub-subfamily. In terms of assembly, interacts with RAB26. Interacts with PPP1R9B. Interacts with GGA1, GGA2 and GGA3.

The protein resides in the cell membrane. Functionally, alpha-2 adrenergic receptors mediate the catecholamine-induced inhibition of adenylate cyclase through the action of G proteins. This is Alpha-2B adrenergic receptor (ADRA2B) from Macroscelides proboscideus (Short-eared elephant shrew).